Reading from the N-terminus, the 515-residue chain is Maturase K (515 aa).

The protein belongs to the intron maturase 2 family. MatK subfamily.

The protein localises to the plastid. It localises to the chloroplast. Its function is as follows. Usually encoded in the trnK tRNA gene intron. Probably assists in splicing its own and other chloroplast group II introns. The sequence is that of Maturase K from Pinus halepensis (Aleppo pine).